Reading from the N-terminus, the 64-residue chain is Alpha-mammal toxin Lqh2 (64 aa).

The region spanning 2–64 is the LCN-type CS-alpha/beta domain; the sequence is KDGYIVDDVN…VRTKGPGRCR (63 aa). 4 disulfides stabilise this stretch: cysteine 12–cysteine 63, cysteine 16–cysteine 36, cysteine 22–cysteine 46, and cysteine 26–cysteine 48. Residue arginine 64 is modified to Arginine amide.

Belongs to the long (4 C-C) scorpion toxin superfamily. Sodium channel inhibitor family. Alpha subfamily. Expressed by the venom gland.

The protein localises to the secreted. Alpha toxins bind voltage-independently at site-3 of sodium channels (Nav) and inhibit the inactivation of the activated channels, thereby blocking neuronal transmission. The dissociation is voltage-dependent. Is active on mammals and competes for alpha-toxins binding on both mammalian and cockroach sodium channels. The chain is Alpha-mammal toxin Lqh2 from Leiurus hebraeus (Hebrew deathstalker scorpion).